Consider the following 82-residue polypeptide: Large ribosomal subunit protein uL23 (82 aa).

This sequence belongs to the universal ribosomal protein uL23 family. As to quaternary structure, part of the 50S ribosomal subunit. Contacts protein L29.

Binds to 23S rRNA. One of the proteins that surrounds the polypeptide exit tunnel on the outside of the ribosome. The polypeptide is Large ribosomal subunit protein uL23 (Sulfurisphaera tokodaii (strain DSM 16993 / JCM 10545 / NBRC 100140 / 7) (Sulfolobus tokodaii)).